The following is a 204-amino-acid chain: Venom allergen 5 (204 aa).

4 disulfide bridges follow: cysteine 4/cysteine 17, cysteine 8/cysteine 101, cysteine 26/cysteine 94, and cysteine 170/cysteine 187. The region spanning 45-189 (LKEHNDFRQK…WHKHYLVCNY (145 aa)) is the SCP domain.

The protein belongs to the CRISP family. Venom allergen 5-like subfamily. As to expression, expressed by the venom gland.

It is found in the secreted. The sequence is that of Venom allergen 5 from Vespula pensylvanica (Western yellow jacket).